We begin with the raw amino-acid sequence, 506 residues long: MIFQKRTFFIKRGCVLNIRVRYAPSPTGLQHIGGIRTALFNYFFAKSFNGKFLLRIEDTDQTRYYKEAEEDLYQSLAWLGIDFDEGPTCGGSYSPYIQSQRTEIYRKYAKELIESGNAYYCYCSPDRLERIRKIQTINKMVPGYDRHCRHLNKDEIKDALSLGISPVIRFKIPFDGETSFNDILLGKITWANKDISPDPVILKSDGFPTYHLANVVDDHLMEISHVLRAQEWISSGSLHVLLYNAFGWNPPIYCHLPMVMGSDGQKLSKRHGATALKQFIDDGYLPEAIINYVTLLGWSYDGKSEFFTKNELQKLFSIDKISKSPAVFDYNKLDFFNSHYIRTKEDHELAELLLPFLQKAGYIKKDSNSCDKEKLLLLVPLIKPRIRKLGDAVGMLRFFYTNISTWNVNEFLGKKKTVRDIYLLLEKIKPVLEGFETRILSENEQIFYNFAKENNLKIGEVLIPIRIAVLGSKVSPPLFDSLQLLGKVKVFDRINKAQDFLKKYEL.

The short motif at 24 to 34 (PSPTGLQHIGG) is the 'HIGH' region element. Zn(2+) contacts are provided by C121, C123, C148, and H150. The 'KMSKS' region signature appears at 266-270 (KLSKR). K269 is a binding site for ATP.

The protein belongs to the class-I aminoacyl-tRNA synthetase family. Glutamate--tRNA ligase type 1 subfamily. As to quaternary structure, monomer. The cofactor is Zn(2+).

Its subcellular location is the cytoplasm. It catalyses the reaction tRNA(Glu) + L-glutamate + ATP = L-glutamyl-tRNA(Glu) + AMP + diphosphate. Its function is as follows. Catalyzes the attachment of glutamate to tRNA(Glu) in a two-step reaction: glutamate is first activated by ATP to form Glu-AMP and then transferred to the acceptor end of tRNA(Glu). This is Glutamate--tRNA ligase from Borrelia recurrentis (strain A1).